We begin with the raw amino-acid sequence, 293 residues long: Acetyl-coenzyme A carboxylase carboxyl transferase subunit beta (293 aa).

Residues 29–293 (LWVKCSECSQ…GVKELAEANT (265 aa)) form the CoA carboxyltransferase N-terminal domain. Cysteine 33, cysteine 36, cysteine 52, and cysteine 55 together coordinate Zn(2+). The segment at 33 to 55 (CSECSQVAYRKDLISNFNVCSNC) adopts a C4-type zinc-finger fold.

It belongs to the AccD/PCCB family. In terms of assembly, acetyl-CoA carboxylase is a heterohexamer composed of biotin carboxyl carrier protein (AccB), biotin carboxylase (AccC) and two subunits each of ACCase subunit alpha (AccA) and ACCase subunit beta (AccD). The cofactor is Zn(2+).

The protein localises to the cytoplasm. The enzyme catalyses N(6)-carboxybiotinyl-L-lysyl-[protein] + acetyl-CoA = N(6)-biotinyl-L-lysyl-[protein] + malonyl-CoA. It functions in the pathway lipid metabolism; malonyl-CoA biosynthesis; malonyl-CoA from acetyl-CoA: step 1/1. Its function is as follows. Component of the acetyl coenzyme A carboxylase (ACC) complex. Biotin carboxylase (BC) catalyzes the carboxylation of biotin on its carrier protein (BCCP) and then the CO(2) group is transferred by the transcarboxylase to acetyl-CoA to form malonyl-CoA. This Prochlorococcus marinus (strain MIT 9301) protein is Acetyl-coenzyme A carboxylase carboxyl transferase subunit beta.